The primary structure comprises 366 residues: LKEEAFILGMDVSFMDEIEQHGGSYRDENGQQEDLLTLLKMGDANAIRLRIWNDPVGGFCNLERTVAVAKRVKEHGLHFLLDFHYSDRWADPANQWKPKAWEKLSYEELQRAVCNYTADVLRTLKEHDALPDMVQVGNEITPGMLWDEGRVSGEEHDTDEQWERFAGLVKYGIAAVKSVDSEIKIMIHIDRGGDNAESRKFYDRFEALGVEFDIIGLSYYPWWHGTLDALRDNLHDLAERYGKPINVVETAYPWTLEQPDGHEWILNQEELLLPGYPASVEGQTRYLKDLLQIVREVPGGLGAGFYYWEPAWIPSKEEWSVGHPNNWGNLTMFDFKGQKLQSFSALKAGLENETEWDEQPNAALIK.

Glu139 acts as the Proton donor in catalysis. Catalysis depends on Glu249, which acts as the Nucleophile.

This sequence belongs to the glycosyl hydrolase 53 family.

This is an uncharacterized protein from Niallia circulans (Bacillus circulans).